The sequence spans 481 residues: NADH-quinone oxidoreductase subunit N (481 aa).

The next 14 membrane-spanning stretches (helical) occupy residues alanine 11 to tryptophan 31, leucine 38 to methionine 58, phenylalanine 69 to valine 89, valine 107 to leucine 127, leucine 128 to tyrosine 148, phenylalanine 162 to leucine 182, leucine 203 to alanine 223, proline 237 to isoleucine 257, tryptophan 271 to isoleucine 291, methionine 299 to threonine 319, phenylalanine 327 to valine 347, tyrosine 370 to phenylalanine 390, valine 401 to phenylalanine 421, and leucine 457 to methionine 477.

This sequence belongs to the complex I subunit 2 family. In terms of assembly, NDH-1 is composed of 14 different subunits. Subunits NuoA, H, J, K, L, M, N constitute the membrane sector of the complex.

It localises to the cell inner membrane. It catalyses the reaction a quinone + NADH + 5 H(+)(in) = a quinol + NAD(+) + 4 H(+)(out). Functionally, NDH-1 shuttles electrons from NADH, via FMN and iron-sulfur (Fe-S) centers, to quinones in the respiratory chain. The immediate electron acceptor for the enzyme in this species is believed to be ubiquinone. Couples the redox reaction to proton translocation (for every two electrons transferred, four hydrogen ions are translocated across the cytoplasmic membrane), and thus conserves the redox energy in a proton gradient. This is NADH-quinone oxidoreductase subunit N from Acidithiobacillus ferrooxidans (strain ATCC 23270 / DSM 14882 / CIP 104768 / NCIMB 8455) (Ferrobacillus ferrooxidans (strain ATCC 23270)).